The following is a 328-amino-acid chain: UPF0421 protein SAV1889 (328 aa).

4 helical membrane passes run 19–39 (IAIF…IYAI), 61–81 (LPAT…FGDQ), 108–128 (VAVL…IFNF), and 132–152 (TLTA…VFPP).

The protein belongs to the UPF0421 family.

It is found in the cell membrane. The chain is UPF0421 protein SAV1889 from Staphylococcus aureus (strain Mu50 / ATCC 700699).